The primary structure comprises 1086 residues: Receptor-type guanylate cyclase gcy-6 (1086 aa).

The signal sequence occupies residues 1–21 (MIGVYLRSVIFPLLFVIQTIC). Residues 22 to 487 (QPPGNVFHLG…PANVFFQYIG (466 aa)) lie on the Extracellular side of the membrane. Residues Asn-325, Asn-343, Asn-387, and Asn-427 are each glycosylated (N-linked (GlcNAc...) asparagine). A helical transmembrane segment spans residues 488-508 (WFIAAIIIIFFTIMGAILAFI). Topologically, residues 509–1086 (YLCHAKQQEV…APKILKKKQD (578 aa)) are cytoplasmic. A Protein kinase domain is found at 560–836 (SSTLSEVGET…NDNLMDHVFN (277 aa)). Residues 566–574 (VGETRNYLF) and Lys-589 contribute to the ATP site. The Guanylate cyclase domain occupies 894-1024 (TLFFSDVVSF…DAVNTASRME (131 aa)).

This sequence belongs to the adenylyl cyclase class-4/guanylyl cyclase family. Expressed in both ASEL and ASER neurons throughout late embryonic and early larval stages. In adults, expressed asymmetrically in ASE left (ASEL) sensory neuron.

It localises to the cell membrane. The enzyme catalyses GTP = 3',5'-cyclic GMP + diphosphate. Its function is as follows. Guanylate cyclase involved in the production of the second messenger cGMP. Regulates chemotaxis responses toward the salt ion Mg(2+) and to a lesser extent toward Cl(1-) in ASE left (ASEL) sensory neuron. The sequence is that of Receptor-type guanylate cyclase gcy-6 from Caenorhabditis elegans.